The following is a 432-amino-acid chain: MINRYSRPEMANIWSEENKYRAWLEVEILADEAWAELGEIPKEDVAKIREKADFDIDRILEIEQQTRHDVVAFTRAVSETLGEERKWVHFGLTSTDVVDTAYGYLYKQANAIIRKDLDNFLSIIADKAKEHKFTIMMGRTHGVHAEPTTFGLKLATWYSEMKRNIERFEHAAAGVEAGKISGAVGNFANIPPFVEKYVCDKLGIRAQEISTQVLPRDLHAEYFAVLASIATSIERMATEIRGLQKSEQREVEEFFAKGQKGSSAMPHKRNPIGSENMTGLARVIRGHMVTAYENVSLWHERDISHSSAERIIAPDTTILIDYMLNRFGNIVKNLTVFPENMKRNMGSTFGLIFSQRAMLTLIEKGMTREQAYDLVQPKTAQSWDNQVDFKPLLEADPEITSRLSQEEIDEIFNPVYYTKRVDEIFDRIGLGD.

N(6)-(1,2-dicarboxyethyl)-AMP contacts are provided by residues 4 to 5 (RY), 67 to 69 (RHD), and 93 to 94 (TS). The Proton donor/acceptor role is filled by histidine 141. Residue glutamine 212 coordinates N(6)-(1,2-dicarboxyethyl)-AMP. The active-site Proton donor/acceptor is serine 262. Residues serine 263, 268–270 (KRN), asparagine 276, and 307–311 (SAERI) contribute to the N(6)-(1,2-dicarboxyethyl)-AMP site.

This sequence belongs to the lyase 1 family. Adenylosuccinate lyase subfamily. In terms of assembly, homodimer and homotetramer. Residues from neighboring subunits contribute catalytic and substrate-binding residues to each active site.

The enzyme catalyses N(6)-(1,2-dicarboxyethyl)-AMP = fumarate + AMP. It carries out the reaction (2S)-2-[5-amino-1-(5-phospho-beta-D-ribosyl)imidazole-4-carboxamido]succinate = 5-amino-1-(5-phospho-beta-D-ribosyl)imidazole-4-carboxamide + fumarate. It participates in purine metabolism; AMP biosynthesis via de novo pathway; AMP from IMP: step 2/2. It functions in the pathway purine metabolism; IMP biosynthesis via de novo pathway; 5-amino-1-(5-phospho-D-ribosyl)imidazole-4-carboxamide from 5-amino-1-(5-phospho-D-ribosyl)imidazole-4-carboxylate: step 2/2. Its function is as follows. Catalyzes two reactions in de novo purine nucleotide biosynthesis. Catalyzes the breakdown of 5-aminoimidazole- (N-succinylocarboxamide) ribotide (SAICAR or 2-[5-amino-1-(5-phospho-beta-D-ribosyl)imidazole-4-carboxamido]succinate) to 5-aminoimidazole-4-carboxamide ribotide (AICAR or 5-amino-1-(5-phospho-beta-D-ribosyl)imidazole-4-carboxamide) and fumarate, and of adenylosuccinate (ADS or N(6)-(1,2-dicarboxyethyl)-AMP) to adenosine monophosphate (AMP) and fumarate. The chain is Adenylosuccinate lyase (purB) from Streptococcus mutans serotype c (strain ATCC 700610 / UA159).